The following is a 255-amino-acid chain: 5-oxoprolinase subunit A (255 aa).

The protein belongs to the LamB/PxpA family. In terms of assembly, forms a complex composed of PxpA, PxpB and PxpC.

The catalysed reaction is 5-oxo-L-proline + ATP + 2 H2O = L-glutamate + ADP + phosphate + H(+). Functionally, catalyzes the cleavage of 5-oxoproline to form L-glutamate coupled to the hydrolysis of ATP to ADP and inorganic phosphate. The sequence is that of 5-oxoprolinase subunit A from Pyrococcus furiosus (strain ATCC 43587 / DSM 3638 / JCM 8422 / Vc1).